Reading from the N-terminus, the 341-residue chain is MLLLSIESSCDETAASVVRNGREILSNIVASQISIHADYGGVVPEIASRKHLETISIVIEEALRKADLPISAIEGIAVTRGPGLAGALLVGISTAKALAYGLNIPVVGVNHIESHILAIMLESDVKFPFIALAVSGGHTHLYEVQAIGRYRTIGQTLDDAAGEAFDKVAKLMGLPYPGGALIDRLAAEGDPRAIKFPRPLMHEDNYNFSFSGLKTAVLNYVRKNPAAMEGSALNDVCASFQAAVCEVLVSKTRAAVIQSGIKRLVVAGGVACNSGLRRDMATFAETEGAELFIPSPLLCSDNAAMLAVPGDYYLCNNIACGFELDALPVWPLDAISLTGGN.

Residues H111 and H115 each coordinate Fe cation. Residues A133–G137, D166, G179, D183, and N273 contribute to the substrate site. D301 provides a ligand contact to Fe cation.

It belongs to the KAE1 / TsaD family. Requires Fe(2+) as cofactor.

It localises to the cytoplasm. It carries out the reaction L-threonylcarbamoyladenylate + adenosine(37) in tRNA = N(6)-L-threonylcarbamoyladenosine(37) in tRNA + AMP + H(+). Its function is as follows. Required for the formation of a threonylcarbamoyl group on adenosine at position 37 (t(6)A37) in tRNAs that read codons beginning with adenine. Is involved in the transfer of the threonylcarbamoyl moiety of threonylcarbamoyl-AMP (TC-AMP) to the N6 group of A37, together with TsaE and TsaB. TsaD likely plays a direct catalytic role in this reaction. The sequence is that of tRNA N6-adenosine threonylcarbamoyltransferase from Geotalea daltonii (strain DSM 22248 / JCM 15807 / FRC-32) (Geobacter daltonii).